Consider the following 2694-residue polypeptide: Teneurin-3 (2694 aa).

Disordered stretches follow at residues 1–45 (MDVK…SSSE), 106–132 (PSSL…DNQS), and 161–198 (TQPA…PSVT). The Teneurin N-terminal domain occupies 1 to 306 (MDVKERRPYC…KSSKYCSWRC (306 aa)). Over 1–312 (MDVKERRPYC…SWRCTALSAM (312 aa)) the chain is Cytoplasmic. Over residues 163-184 (PAPSHSCNEQPSNQHQQGQSTL) the composition is skewed to polar residues. The chain crosses the membrane as a helical span at residues 313 to 333 (AVSILLSVLLCYCIAMHLFGL). The Extracellular portion of the chain corresponds to 334 to 2694 (NWQLQETEGY…FLRQSEIGKR (2361 aa)). N-linked (GlcNAc...) asparagine glycosylation is found at N374 and N413. 8 EGF-like domains span residues 508-539 (TLTE…PDCS), 540-570 (RAAC…TECD), 572-604 (PSNQ…DNCE), 605-636 (EVDC…NNCE), 638-671 (LKTM…PDCS), 672-703 (IEVC…VCDL), 704-733 (KACH…EHCT), and 734-768 (VEGC…AGCD). Cystine bridges form between C512/C522, C516/C527, C529/C538, C547/C558, C560/C569, C576/C587, C581/C592, C594/C603, C608/C619, C613/C624, C626/C635, C646/C659, C661/C670, C675/C685, C679/C690, C692/C701, C706/C716, C710/C721, C723/C732, C737/C747, C741/C756, and C758/C767. N-linked (GlcNAc...) asparagine glycosylation is present at N664. Residues N854, N877, and N1048 are each glycosylated (N-linked (GlcNAc...) asparagine). 5 NHL repeats span residues 1166-1192 (LLAP…RRIF), 1194-1238 (SGNV…PKAL), 1264-1308 (ARCG…NGII), 1325-1365 (CDNS…ITEN), and 1452-1495 (CYQT…IRHN). N-linked (GlcNAc...) asparagine glycosylation occurs at N1196. The YD 1 repeat unit spans residues 1505–1524 (FEVASPASQELYVFDSNGTH). N1521 and N1538 each carry an N-linked (GlcNAc...) asparagine glycan. 3 YD repeats span residues 1541 to 1561 (YSNE…LRVR), 1604 to 1623 (YHGN…WTTF), and 1624 to 1646 (YDYD…TSLI). N-linked (GlcNAc...) asparagine glycans are attached at residues N1634, N1671, N1729, and N1814. YD repeat units lie at residues 1817-1836 (YSST…ERVE), 1858-1876 (YLDK…YIFD), 1877-1897 (YDLQ…HTMQ), 1904-1921 (YYRN…VTVD), 1922-1943 (YSED…VLYK), 1944-1961 (YRRQ…TRVS), 1964-1984 (YDET…FICS), 1987-2007 (YRQI…DGMV), 2015-2034 (YDNS…TPLP), 2040-2057 (FDDI…GVIY), 2058-2084 (YDIN…IKEI), 2086-2099 (YEIF…ITIQ), 2100-2123 (YDNM…TKYG), 2126-2146 (YDVD…WRYN), 2147-2167 (YDLN…LTPL), 2169-2189 (YDLR…DEDG), 2201-2221 (YNSK…TIQY), and 2223-2243 (YDGL…LQFF). N-linked (GlcNAc...) asparagine glycosylation is present at N1915. The N-linked (GlcNAc...) asparagine glycan is linked to N2118. An N-linked (GlcNAc...) asparagine glycan is attached at N2258. The stretch at 2269–2310 (YDLQGHLFAMEISSGEEFYIACDNTGTPLAVFSSNGLLLKQV) is one YD 23 repeat. The N-linked (GlcNAc...) asparagine glycan is linked to N2571.

It belongs to the tenascin family. Teneurin subfamily. Homodimer; disulfide-linked; to mediate homophilic cell adhesion. In terms of tissue distribution, expressed by retinal ganglion cells and their presynaptic amacrine and postsynaptic tectal cell targets.

It localises to the cell membrane. It is found in the cell projection. The protein localises to the axon. Functionally, involved in neural development by regulating the establishment of proper connectivity within the nervous system. Acts in both pre- and postsynaptic neurons in the hippocampus to control the assembly of a precise topographic projection: required in both CA1 and subicular neurons for the precise targeting of proximal CA1 axons to distal subiculum, probably by promoting homophilic cell adhesion. Required by retinal ganglion cells for acquisition of their correct morphological and functional connectivity, thereby playing a key role in the development of the visual pathway. This chain is Teneurin-3 (tenm3), found in Danio rerio (Zebrafish).